The chain runs to 510 residues: DAP3-binding cell death enhancer 1 (510 aa).

The N-terminal 23 residues, 1–23 (MWRLTGILGRALPRLLGPGFRGI), are a transit peptide targeting the mitochondrion. Disordered regions lie at residues 19-61 (GFRG…SRDP) and 142-185 (VLPR…SGLL). A propeptide spans 24–101 (TPKPTSSDGS…AVLALHLARQ (78 aa)) (extended MTS). Over residues 35–45 (TTSPTLPLTRL) the composition is skewed to low complexity. Basic and acidic residues-rich tracts occupy residues 46-61 (SFDR…SRDP) and 155-167 (GLRE…EDHP). A compositionally biased stretch (polar residues) spans 169–181 (APSQCLPSDSSLR). TPR repeat units follow at residues 213–245 (AHPP…QLSV), 246–278 (AITF…RGYS), 279–313 (KAQY…VQGH), 314–351 (SLAQ…DSGL), 352–385 (TEAQ…SNGD), 386–423 (SQSR…GNEP), and 471–499 (ASST…TIPS). The SIFI-degron signature appears at 307 to 326 (LAAVQGHSLAQYRYARCLLQ).

This sequence belongs to the DELE1 family. Interacts with DAP3. As to quaternary structure, interacts (via TPR repeats) with EIF2AK1/HRI; activating the protein kinase activity of EIF2AK1/HRI, thereby promoting the integrated stress response (ISR). In terms of assembly, homooctamer; oligomerization is required to activate EIF2AK1/HRI. Interacts (via TPR repeats) with EIF2AK1/HRI; activating the protein kinase activity of EIF2AK1/HRI, thereby promoting the integrated stress response (ISR). Unstable protein in absence of stress: imported in the mitochondrial matrix following processing by the mitochondrial-processing peptidase (MPP), where it is degraded by LONP1. Stabilized in response to iron deficiency: iron deficiency impairs mitochondrial import, promoting localization at the mitochondrial surface and stabilization. Cleaved by OMA1 in response to mitochondrial stress, generating the DAP3-binding cell death enhancer 1 short form (DELE1(S) or S-DELE1) that accumulates in the cytosol and activates the protein kinase activity of EIF2AK1/HRI. Protein cleavage by OMA1 can take place at different positions, and apparently does not require a specific sequence motif. Post-translationally, ubiquitinated and degraded by the SIFI complex once the mitochondrial stress has been resolved, thereby providing stress response silencing. Within the SIFI complex, UBR4 initiates ubiquitin chain that are further elongated or branched by KCMF1.

The protein resides in the mitochondrion. The protein localises to the mitochondrion outer membrane. It localises to the mitochondrion inner membrane. It is found in the cytoplasm. Its subcellular location is the cytosol. Functionally, protein kinase activator that acts as a key activator of the integrated stress response (ISR) following various stresses, such as iron deficiency, mitochondrial stress or mitochondrial DNA breaks. Detects impaired protein import and processing in mitochondria, activating the ISR. May also required for the induction of death receptor-mediated apoptosis through the regulation of caspase activation. Protein kinase activator that activates the ISR in response to iron deficiency: iron deficiency impairs mitochondrial import, promoting DELE1 localization at the mitochondrial surface, where it binds and activates EIF2AK1/HRI to trigger the ISR. In terms of biological role, protein kinase activator generated by protein cleavage in response to mitochondrial stress, which accumulates in the cytosol and specifically binds to and activates the protein kinase activity of EIF2AK1/HRI. It thereby activates the integrated stress response (ISR): EIF2AK1/HRI activation promotes eIF-2-alpha (EIF2S1) phosphorylation, leading to a decrease in global protein synthesis and the induction of selected genes, including the transcription factor ATF4, the master transcriptional regulator of the ISR. Also acts as an activator of PRKN-independent mitophagy: activates the protein kinase activity of EIF2AK1/HRI in response to mitochondrial damage, promoting eIF-2-alpha (EIF2S1) phosphorylation, leading to mitochondrial localization of EIF2S1 followed by induction of mitophagy. The chain is DAP3-binding cell death enhancer 1 from Mus musculus (Mouse).